We begin with the raw amino-acid sequence, 278 residues long: Coiled-coil domain-containing protein 106 (278 aa).

The stretch at 61–99 forms a coiled coil; sequence AQLHLALERNSWLQKRIEDLEEERDFLRCQLDKFISSAR. Positions 102-119 are enriched in basic and acidic residues; that stretch reads ADDHCRGKPGPRRAEGDG. A disordered region spans residues 102–174; it reads ADDHCRGKPG…KPKARERQRV (73 aa). Position 128 is a phosphoserine (S128). Low complexity predominate over residues 131–144; that stretch reads ESAASSLSGASEEG. The span at 150 to 166 shows a compositional bias: basic residues; it reads KRQKQKGGPGRRRFGKP. The Bipartite nuclear localization signal motif lies at 151–164; sequence RQKQKGGPGRRRFG.

Interacts with p53/TP53.

Its subcellular location is the nucleus. Promotes the degradation of p53/TP53 protein and inhibits its transactivity. This Bos taurus (Bovine) protein is Coiled-coil domain-containing protein 106 (CCDC106).